We begin with the raw amino-acid sequence, 154 residues long: Myoglobin (154 aa).

A Globin domain is found at 2 to 148 (GLSDGEWQLV…FRNDMAAKYK (147 aa)). S4 carries the phosphoserine modification. H65 lines the nitrite pocket. Residue H65 coordinates O2. At T68 the chain carries Phosphothreonine. Heme b is bound at residue H94.

This sequence belongs to the globin family. As to quaternary structure, monomeric.

The protein localises to the cytoplasm. It localises to the sarcoplasm. It catalyses the reaction Fe(III)-heme b-[protein] + nitric oxide + H2O = Fe(II)-heme b-[protein] + nitrite + 2 H(+). The enzyme catalyses H2O2 + AH2 = A + 2 H2O. Its function is as follows. Monomeric heme protein which primary function is to store oxygen and facilitate its diffusion within muscle tissues. Reversibly binds oxygen through a pentacoordinated heme iron and enables its timely and efficient release as needed during periods of heightened demand. Depending on the oxidative conditions of tissues and cells, and in addition to its ability to bind oxygen, it also has a nitrite reductase activity whereby it regulates the production of bioactive nitric oxide. Under stress conditions, like hypoxia and anoxia, it also protects cells against reactive oxygen species thanks to its pseudoperoxidase activity. The chain is Myoglobin (MB) from Callithrix jacchus (White-tufted-ear marmoset).